The chain runs to 412 residues: MTNYRVESSSGRAARKMRLALMGPAFIAAIGYIDPGNFATNIQAGASFGYQLLWVVVWANLMAMLIQILSAKLGIATGKNLAEQIRDHYPRPFVWFYWVQAEIIAMATDLAEFIGAAIGFKLILGVSLLQGAVLTGIATFLILMLQRRGQKPLEKVIGGLLLFVAAAYIVELIFSQPNLAQLGKGMVIPSLPTSEAVFLAAGVLGATIMPHVIYLHSSLTQHLHGGSRQQRYSATKWDVAIAMTIAGFVNLAMMATAAAAFHFSGHTGVADLDEAYLTLQPLLSHAAATVFGLSLVAAGLSSTVVGTLAGQVVMQGFIRFHIPLWVRRTVTMLPSFIVILMGLDPTRILVMSQVLLSFGIALALVPLLIFTSDSKLMGDLVNSKRVKQTGWVIVVLVVALNIWLLVGTALGL.

At 1–19 (MTNYRVESSSGRAARKMRL) the chain is on the cytoplasmic side. The chain crosses the membrane as a helical span at residues 20-39 (ALMGPAFIAAIGYIDPGNFA). At 40 to 51 (TNIQAGASFGYQ) the chain is on the periplasmic side. A helical membrane pass occupies residues 52-71 (LLWVVVWANLMAMLIQILSA). Topologically, residues 72–95 (KLGIATGKNLAEQIRDHYPRPFVW) are cytoplasmic. Residues 96-118 (FYWVQAEIIAMATDLAEFIGAAI) form a helical membrane-spanning segment. The Periplasmic segment spans residues 119–125 (GFKLILG). The chain crosses the membrane as a helical span at residues 126 to 145 (VSLLQGAVLTGIATFLILML). The Cytoplasmic portion of the chain corresponds to 146–155 (QRRGQKPLEK). Residues 156 to 175 (VIGGLLLFVAAAYIVELIFS) traverse the membrane as a helical segment. Residues 176–196 (QPNLAQLGKGMVIPSLPTSEA) are Periplasmic-facing. A helical membrane pass occupies residues 197–220 (VFLAAGVLGATIMPHVIYLHSSLT). Residues 221-238 (QHLHGGSRQQRYSATKWD) lie on the Cytoplasmic side of the membrane. The helical transmembrane segment at 239-258 (VAIAMTIAGFVNLAMMATAA) threads the bilayer. The Periplasmic segment spans residues 259 to 276 (AAFHFSGHTGVADLDEAY). A helical membrane pass occupies residues 277–297 (LTLQPLLSHAAATVFGLSLVA). At 298-327 (AGLSSTVVGTLAGQVVMQGFIRFHIPLWVR) the chain is on the cytoplasmic side. Residues 328-344 (RTVTMLPSFIVILMGLD) traverse the membrane as a helical segment. The Periplasmic portion of the chain corresponds to 345–350 (PTRILV). A helical transmembrane segment spans residues 351–370 (MSQVLLSFGIALALVPLLIF). The Cytoplasmic segment spans residues 371-387 (TSDSKLMGDLVNSKRVK). Residues 388-406 (QTGWVIVVLVVALNIWLLV) form a helical membrane-spanning segment. Residues 407–412 (GTALGL) are Periplasmic-facing.

Belongs to the NRAMP family.

Its subcellular location is the cell inner membrane. In terms of biological role, h(+)-stimulated, divalent metal cation uptake system. The sequence is that of Divalent metal cation transporter MntH from Escherichia coli O127:H6 (strain E2348/69 / EPEC).